The primary structure comprises 239 residues: Ribosomal RNA large subunit methyltransferase E (239 aa).

The disordered stretch occupies residues 1-20; the sequence is MTKAPIAGNRTGRKLGQRVK. Basic residues predominate over residues 11–20; the sequence is TGRKLGQRVK. S-adenosyl-L-methionine-binding residues include G81, W83, D104, D120, and D144. K184 acts as the Proton acceptor in catalysis.

The protein belongs to the class I-like SAM-binding methyltransferase superfamily. RNA methyltransferase RlmE family.

The protein resides in the cytoplasm. The enzyme catalyses uridine(2552) in 23S rRNA + S-adenosyl-L-methionine = 2'-O-methyluridine(2552) in 23S rRNA + S-adenosyl-L-homocysteine + H(+). Specifically methylates the uridine in position 2552 of 23S rRNA at the 2'-O position of the ribose in the fully assembled 50S ribosomal subunit. The sequence is that of Ribosomal RNA large subunit methyltransferase E from Rhizobium etli (strain ATCC 51251 / DSM 11541 / JCM 21823 / NBRC 15573 / CFN 42).